The chain runs to 141 residues: Hemoglobin subunit alpha (141 aa).

In terms of domain architecture, Globin spans 1-141 (VLSANDKSNV…VSTVLTSKYR (141 aa)). The residue at position 3 (S3) is a Phosphoserine. N6-succinyllysine is present on residues K7 and K11. K16 is modified (N6-acetyllysine; alternate). Residue K16 is modified to N6-succinyllysine; alternate. Y24 carries the post-translational modification Phosphotyrosine. S35 carries the post-translational modification Phosphoserine. An N6-succinyllysine modification is found at K40. S49 carries the post-translational modification Phosphoserine. H58 lines the O2 pocket. H87 contacts heme b. S102 is subject to Phosphoserine. T108 bears the Phosphothreonine mark. S124 is modified (phosphoserine). A phosphothreonine mark is found at T134 and T137. A Phosphoserine modification is found at S138.

Belongs to the globin family. As to quaternary structure, heterotetramer of two alpha chains and two beta chains. In terms of tissue distribution, red blood cells.

In terms of biological role, involved in oxygen transport from the lung to the various peripheral tissues. Hemopressin acts as an antagonist peptide of the cannabinoid receptor CNR1. Hemopressin-binding efficiently blocks cannabinoid receptor CNR1 and subsequent signaling. This chain is Hemoglobin subunit alpha (HBA), found in Hippopotamus amphibius (Hippopotamus).